Reading from the N-terminus, the 273-residue chain is Shikimate kinase (273 aa).

85–95 (PVGKGLKSSSA) contacts ATP.

The protein belongs to the GHMP kinase family. Archaeal shikimate kinase subfamily.

It is found in the cytoplasm. The enzyme catalyses shikimate + ATP = 3-phosphoshikimate + ADP + H(+). The protein operates within metabolic intermediate biosynthesis; chorismate biosynthesis; chorismate from D-erythrose 4-phosphate and phosphoenolpyruvate: step 5/7. The protein is Shikimate kinase of Pyrococcus furiosus (strain ATCC 43587 / DSM 3638 / JCM 8422 / Vc1).